The primary structure comprises 380 residues: Cytochrome b (380 aa).

A run of 4 helical transmembrane segments spans residues 34–54 (FGSL…LLAT), 78–99 (WLIR…YLHI), 114–134 (WNTG…GYVL), and 179–199 (FFAL…IHLT). Residues histidine 84 and histidine 98 each coordinate heme b. 2 residues coordinate heme b: histidine 183 and histidine 197. Residue histidine 202 coordinates a ubiquinone. 4 helical membrane-spanning segments follow: residues 227–247 (LKDI…ALFS), 289–309 (LGGV…PLLH), 321–341 (FSQF…WVGS), and 348–368 (FIII…LLFP).

The protein belongs to the cytochrome b family. The cytochrome bc1 complex contains 11 subunits: 3 respiratory subunits (MT-CYB, CYC1 and UQCRFS1), 2 core proteins (UQCRC1 and UQCRC2) and 6 low-molecular weight proteins (UQCRH/QCR6, UQCRB/QCR7, UQCRQ/QCR8, UQCR10/QCR9, UQCR11/QCR10 and a cleavage product of UQCRFS1). This cytochrome bc1 complex then forms a dimer. Heme b is required as a cofactor.

Its subcellular location is the mitochondrion inner membrane. Component of the ubiquinol-cytochrome c reductase complex (complex III or cytochrome b-c1 complex) that is part of the mitochondrial respiratory chain. The b-c1 complex mediates electron transfer from ubiquinol to cytochrome c. Contributes to the generation of a proton gradient across the mitochondrial membrane that is then used for ATP synthesis. The chain is Cytochrome b (MT-CYB) from Alle alle (Dovekie).